Consider the following 231-residue polypeptide: 26S proteasome non-ATPase regulatory subunit 10 (231 aa).

ANK repeat units follow at residues 3-36 (GCVSNLMVCNLAYNGKLDELKESILADKSLATRT), 37-69 (DQDSRTALHWACSAGHTEIVEFLLQLGVPVNEK), 70-102 (DDAGWSPLHIAASAGRDEIVKALLIKGAQVNAV), 103-135 (NQNGCTALHYAASKNRHEIAVMLLEGGANPDAK), 136-168 (NHYDATAMHRAAAKGNLKMVHILLFYKASTNIQ), 169-201 (DTEGNTPLHLACDEERVEEAKLLVTQGASIYIE), and 202-226 (NKEEKTPLQVAKGGLGLILKRIAES).

In terms of assembly, part of transient complex containing PSMD10, PSMC4, PSMC5 and PAAF1 formed during the assembly of the 26S proteasome. Stays associated throughout the assembly of the PA700/19S RC and is released upon association with the 20S core. Interacts with PSMC4. Interacts with RB1. Interacts with CDK4. Interacts with MDM2. Interacts with RELA. Associates with a CDK4:CCND2 serine/threonine kinase complex. Interacts with ARHGDIA and increases the interaction between ARHGDIA and RHOA, hence promotes ARHGDIA inactivation of RHOA and ROCK.

Its subcellular location is the cytoplasm. The protein localises to the nucleus. Its function is as follows. Acts as a chaperone during the assembly of the 26S proteasome, specifically of the PA700/19S regulatory complex (RC). In the initial step of the base subcomplex assembly is part of an intermediate PSMD10:PSMC4:PSMC5:PAAF1 module which probably assembles with a PSMD5:PSMC2:PSMC1:PSMD2 module. Independently of the proteasome, regulates EGF-induced AKT activation through inhibition of the RHOA/ROCK/PTEN pathway, leading to prolonged AKT activation. Plays an important role in RAS-induced tumorigenesis. Functionally, acts as an oncoprotein by being involved in negative regulation of tumor suppressors RB1 and p53/TP53. Overexpression is leading to phosphorylation of RB1 and proteasomal degradation of RB1. Regulates CDK4-mediated phosphorylation of RB1 by competing with CDKN2A for binding with CDK4. Facilitates binding of MDM2 to p53/TP53 and the mono- and polyubiquitination of p53/TP53 by MDM2 suggesting a function in targeting the TP53:MDM2 complex to the 26S proteasome. Involved in p53-independent apoptosis. Involved in regulation of NF-kappa-B by retaining it in the cytoplasm. Binds to the NF-kappa-B component RELA and accelerates its XPO1/CRM1-mediated nuclear export. The protein is 26S proteasome non-ATPase regulatory subunit 10 (Psmd10) of Rattus norvegicus (Rat).